A 282-amino-acid polypeptide reads, in one-letter code: Acetyl-coenzyme A carboxylase carboxyl transferase subunit beta (282 aa).

A CoA carboxyltransferase N-terminal domain is found at 26–282 (QWVKCPETGE…IIRLLNLLME (257 aa)).

The protein belongs to the AccD/PCCB family. Acetyl-CoA carboxylase is a heterohexamer composed of biotin carboxyl carrier protein (AccB), biotin carboxylase (AccC) and two subunits each of ACCase subunit alpha (AccA) and ACCase subunit beta (AccD).

The protein localises to the cytoplasm. It catalyses the reaction N(6)-carboxybiotinyl-L-lysyl-[protein] + acetyl-CoA = N(6)-biotinyl-L-lysyl-[protein] + malonyl-CoA. It participates in lipid metabolism; malonyl-CoA biosynthesis; malonyl-CoA from acetyl-CoA: step 1/1. Its function is as follows. Component of the acetyl coenzyme A carboxylase (ACC) complex. Biotin carboxylase (BC) catalyzes the carboxylation of biotin on its carrier protein (BCCP) and then the CO(2) group is transferred by the transcarboxylase to acetyl-CoA to form malonyl-CoA. In Salinibacter ruber (strain DSM 13855 / M31), this protein is Acetyl-coenzyme A carboxylase carboxyl transferase subunit beta.